A 258-amino-acid polypeptide reads, in one-letter code: MSATAPFKTLSAKAAFQLDQELMSTGEFSIDQLMELAGLAVAKTIYKEYPPNEATTTTKNKFNPNKVLVLVGPGNNGGDGLVAARHLKLWNYDPIIYYPKRPASNQLYSRLIKQLQDLNVPELTTLTEVKHLLDSRDSKIKIIIDSIFGFSFKPPIREPFKDLINYLGQNHDHLPPIVSVDIPSGWDVDEGPGTEIDIQASCLISLTAPKPCAKLFVNSGPDKIHYLGGRFINPRIAKEYGIEDIVNKYQGDELIVKL.

Positions 15–244 (AFQLDQELMS…RIAKEYGIED (230 aa)) constitute a YjeF N-terminal domain. 75–79 (NNGGD) is a (6S)-NADPHX binding site. K(+)-binding residues include asparagine 76 and aspartate 145. (6S)-NADPHX-binding positions include 149–155 (GFSFKPP) and aspartate 181. Serine 184 contacts K(+).

This sequence belongs to the NnrE/AIBP family. It depends on K(+) as a cofactor.

Its subcellular location is the cytoplasm. It localises to the mitochondrion. The enzyme catalyses (6R)-NADHX = (6S)-NADHX. The catalysed reaction is (6R)-NADPHX = (6S)-NADPHX. Its function is as follows. Catalyzes the epimerization of the S- and R-forms of NAD(P)HX, a damaged form of NAD(P)H that is a result of enzymatic or heat-dependent hydration. This is a prerequisite for the S-specific NAD(P)H-hydrate dehydratase to allow the repair of both epimers of NAD(P)HX. The sequence is that of NAD(P)H-hydrate epimerase from Candida albicans (strain SC5314 / ATCC MYA-2876) (Yeast).